The sequence spans 257 residues: NAD-capped RNA hydrolase NudC (257 aa).

2 residues coordinate substrate: K25 and R69. C98 and C101 together coordinate Zn(2+). E111 contacts substrate. Zn(2+)-binding residues include C116 and C119. Position 124 (Y124) interacts with substrate. Residues 125–248 (PQIAPCIIVA…TVARRLIEDT (124 aa)) enclose the Nudix hydrolase domain. Positions 158, 174, and 178 each coordinate a divalent metal cation. Positions 159–180 (GFVEVGETLEQAVAREVMEESG) match the Nudix box motif. 192–199 (QPWPFPQS) contributes to the substrate binding site. A divalent metal cation is bound at residue E219. A substrate-binding site is contributed by A241.

This sequence belongs to the Nudix hydrolase family. NudC subfamily. Homodimer. The cofactor is Mg(2+). Mn(2+) serves as cofactor. Requires Zn(2+) as cofactor.

It carries out the reaction a 5'-end NAD(+)-phospho-ribonucleoside in mRNA + H2O = a 5'-end phospho-adenosine-phospho-ribonucleoside in mRNA + beta-nicotinamide D-ribonucleotide + 2 H(+). The enzyme catalyses NAD(+) + H2O = beta-nicotinamide D-ribonucleotide + AMP + 2 H(+). It catalyses the reaction NADH + H2O = reduced beta-nicotinamide D-ribonucleotide + AMP + 2 H(+). Functionally, mRNA decapping enzyme that specifically removes the nicotinamide adenine dinucleotide (NAD) cap from a subset of mRNAs by hydrolyzing the diphosphate linkage to produce nicotinamide mononucleotide (NMN) and 5' monophosphate mRNA. The NAD-cap is present at the 5'-end of some mRNAs and stabilizes RNA against 5'-processing. Has preference for mRNAs with a 5'-end purine. Catalyzes the hydrolysis of a broad range of dinucleotide pyrophosphates. The polypeptide is NAD-capped RNA hydrolase NudC (Escherichia coli O7:K1 (strain IAI39 / ExPEC)).